A 65-amino-acid polypeptide reads, in one-letter code: Neurotoxin BmK-M3 (65 aa).

One can recognise an LCN-type CS-alpha/beta domain in the interval Arg2–His64. 4 disulfides stabilise this stretch: Cys12–Cys63, Cys16–Cys36, Cys22–Cys46, and Cys26–Cys48.

This sequence belongs to the long (4 C-C) scorpion toxin superfamily. Sodium channel inhibitor family. Alpha subfamily. Expressed by the venom gland.

It localises to the secreted. Its function is as follows. Binds to sodium channels (Nav) and inhibits the inactivation of the activated channels, thereby blocking neuronal transmission. The protein is Neurotoxin BmK-M3 of Olivierus martensii (Manchurian scorpion).